The primary structure comprises 316 residues: Olfactory receptor class A-like protein 1 (316 aa).

The Extracellular segment spans residues 1-8; it reads MDLCVTIK. Residues 9–29 form a helical membrane-spanning segment; sequence GVSFLLQAGLGILANALVLLA. Residues 30–39 are Cytoplasmic-facing; the sequence is YAHIRLAEAR. Residues 40-60 traverse the membrane as a helical segment; it reads LQPVDAILCHLALVDLLLLLT. Residues 61 to 97 lie on the Extracellular side of the membrane; that stretch reads RGVPQTMTVFGMRNLLDDTGCKVVIYTYRIARALSVC. The cysteines at positions 81 and 169 are disulfide-linked. A helical membrane pass occupies residues 98–118; it reads ITCMLSVFQAVTVAPAAGPLL. The Cytoplasmic segment spans residues 119-132; that stretch reads SGVKARLPQLLAPT. The helical transmembrane segment at 133 to 153 threads the bilayer; the sequence is FAALWFINMAVCIAAPFFSVA. The Extracellular segment spans residues 154 to 187; that stretch reads PRNGTVPPFTLNLGFCHVDFHDNLSYVLNGVAVS. N-linked (GlcNAc...) asparagine glycans are attached at residues asparagine 156 and asparagine 176. Residues 188–208 traverse the membrane as a helical segment; sequence VRDFAFVGAMLASSGFILLLL. The Cytoplasmic portion of the chain corresponds to 209-233; it reads HRHRRQVRAVRRSQGSTMETRAART. Residues 234–254 form a helical membrane-spanning segment; sequence VLMLVILYSVFFGIDNVIWIY. The Extracellular portion of the chain corresponds to 255–264; the sequence is MLTVAQVPPV. Residues 265 to 285 form a helical membrane-spanning segment; it reads VADMRVFFSSCYASLSPFLII. Residues 286–316 are Cytoplasmic-facing; that stretch reads SSNRKLKARMVCATSEQERQAEDGKNSSGKN.

Belongs to the G-protein coupled receptor 1 family. In terms of tissue distribution, highly expressed in the olfactory rosette where it localizes to a subset of olfactory sensory neurons, mainly in the apical region of the neuroepithelium. Not detected in other tissues tested.

The protein resides in the cell membrane. Functionally, probable pheromone receptor. Shows high specificity for 4-hydroxyphenylacetic acid. Activation of the receptor stimulates intracellular calcium release. In Danio rerio (Zebrafish), this protein is Olfactory receptor class A-like protein 1.